A 249-amino-acid polypeptide reads, in one-letter code: Probable transcriptional regulatory protein Tfu_2096 (249 aa).

The protein belongs to the TACO1 family.

The protein resides in the cytoplasm. The chain is Probable transcriptional regulatory protein Tfu_2096 from Thermobifida fusca (strain YX).